A 748-amino-acid chain; its full sequence is Structure-specific endonuclease subunit SLX4 (748 aa).

Positions 62–75 are enriched in polar residues; sequence KSVTAQKSPMTQET. The interval 62–104 is disordered; it reads KSVTAQKSPMTQETTKNDTERNKDVDKSCNPVSTSHPDLGGSN. Threonine 72 is modified (phosphothreonine; by ATR and ATM). The segment covering 76-88 has biased composition (basic and acidic residues); it reads TKNDTERNKDVDK. Threonine 113 carries the phosphothreonine; by ATR and ATM modification. Disordered regions lie at residues 215 to 236 and 277 to 303; these read IKTQ…KGEK and EKSS…PPEL. Basic and acidic residues predominate over residues 222–236; it reads NSDKPPRARNNKGEK. Residues 277 to 298 are compositionally biased toward polar residues; sequence EKSSNSLDNQESSQQRLWTASQ. The residue at position 289 (serine 289) is a Phosphoserine; by ATR and ATM. The residue at position 319 (threonine 319) is a Phosphothreonine; by ATR and ATM. Phosphoserine; by ATR and ATM is present on residues serine 329 and serine 355. The segment covering 591-602 has biased composition (polar residues); the sequence is ISTKDSTQNPTT. The interval 591-610 is disordered; the sequence is ISTKDSTQNPTTSNDIIDTS.

It belongs to the SLX4 family. In terms of assembly, forms a heterodimer with SLX1. Interacts with RAD1; catalytic subunit of the RAD1-RAD10 endonuclease. Interacts with RTT107. Phosphorylated by ATR (MEC1) and ATM (TEL1) upon DNA damage. This appears to be required for the function with the RAD1-RAD10 endonuclease.

The protein localises to the nucleus. Its subcellular location is the cytoplasm. Its function is as follows. Regulatory subunit that interacts with and increases the activity of different structure-specific endonucleases. Has several distinct roles in protecting genome stability by resolving diverse forms of deleterious DNA structures. Component of the SLX1-SLX4 structure-specific endonuclease that resolves DNA secondary structures generated during DNA repair and recombination. Has endonuclease activity towards branched DNA substrates, introducing single-strand cuts in duplex DNA close to junctions with ss-DNA. Has a preference for simple Y, 5'-flap and replication fork-like structures. It cleaves the strand bearing the 5'-non-homologous arm at the branch site junction and generates ligatable, nicked products from the 5'-flap or replication fork substrates. Plays a critical role in maintaining the integrity of the ribosomal DNA (rDNA) loci, where it has a role in re-starting stalled replication forks. Has Holliday junction resolvase activity in vitro. Interacts with the structure-specific RAD1-RAD10 endonuclease and promotes RAD1-RAD10-dependent 3'-non-homologous tail removal (NHTR) during repair of double-strand breaks by single-strand annealing. SLX4 also promotes recovery from DNA-alkylation-induced replisome stalling during DNA replication by facilitating the error-free mode of lesion bypass. This does not require SLX1 or RAD1-RAD10, but probably RTT107. This chain is Structure-specific endonuclease subunit SLX4, found in Saccharomyces cerevisiae (strain RM11-1a) (Baker's yeast).